We begin with the raw amino-acid sequence, 210 residues long: Mediator of RNA polymerase II transcription subunit 20 (210 aa).

Belongs to the Mediator complex subunit 20 family. In terms of assembly, component of the Mediator complex, which is composed of at least 21 subunits that form three structurally distinct submodules. The Mediator head module contains MED6, MED8, MED11, SRB4/MED17, SRB5/MED18, ROX3/MED19, SRB2/MED20 and SRB6/MED22, the middle module contains MED1, MED4, NUT1/MED5, MED7, CSE2/MED9, NUT2/MED10, SRB7/MED21 and SOH1/MED31, and the tail module contains MED2, PGD1/MED3, RGR1/MED14, GAL11/MED15 and SIN4/MED16. The head and the middle modules interact directly with RNA polymerase II, whereas the elongated tail module interacts with gene-specific regulatory proteins. MED1 interacts directly with MED4 and MED7. SRB2/MED20 interacts directly with SRB4/MED17 and SRB5/MED18.

The protein localises to the nucleus. In terms of biological role, component of the Mediator complex, a coactivator involved in the regulated transcription of nearly all RNA polymerase II-dependent genes. Mediator functions as a bridge to convey information from gene-specific regulatory proteins to the basal RNA polymerase II transcription machinery. The Mediator complex, having a compact conformation in its free form, is recruited to promoters by direct interactions with regulatory proteins and serves for the assembly of a functional preinitiation complex with RNA polymerase II and the general transcription factors. The Mediator complex unfolds to an extended conformation and partially surrounds RNA polymerase II, specifically interacting with the unphosphorylated form of the C-terminal domain (CTD) of RNA polymerase II. The Mediator complex dissociates from the RNA polymerase II holoenzyme and stays at the promoter when transcriptional elongation begins. This Saccharomyces cerevisiae (strain ATCC 204508 / S288c) (Baker's yeast) protein is Mediator of RNA polymerase II transcription subunit 20 (SRB2).